Consider the following 621-residue polypeptide: Ubiquitin carboxyl-terminal hydrolase MINDY-2 (621 aa).

Disordered stretches follow at residues 1 to 106 (MESS…RGQY) and 119 to 179 (VGHE…LESF). Ser94 carries the post-translational modification Phosphoserine. The span at 145-163 (AAGSEEPSSAGGLSSSCSD) shows a compositional bias: low complexity. Cys266 acts as the Nucleophile in catalysis. His448 (proton acceptor) is an active-site residue. The interval 507–559 (GQQDQIDQDYLMALSLQQEQQSQEINWEQIPEGISDLELAKKLQEEEDRRASQ) is ubiquitin-binding domain (UBD). A disordered region spans residues 556–621 (RASQYYQEQE…EKEKNSCVIL (66 aa)). A compositionally biased stretch (low complexity) spans 558-591 (SQYYQEQEQAAAAAAAASTQAQQGQPAQASPSSG). Basic and acidic residues predominate over residues 597–621 (SERKRKEPREKDKEKEKEKNSCVIL).

The protein belongs to the MINDY deubiquitinase family. FAM63 subfamily.

The enzyme catalyses Thiol-dependent hydrolysis of ester, thioester, amide, peptide and isopeptide bonds formed by the C-terminal Gly of ubiquitin (a 76-residue protein attached to proteins as an intracellular targeting signal).. Its function is as follows. Hydrolase that can remove 'Lys-48'-linked conjugated ubiquitin from proteins. Binds to polyubiquitin chains of different linkage types, including 'Lys-6', 'Lys-11', 'Lys-29', 'Lys-33', 'Lys-48' and 'Lys-63'. May play a regulatory role at the level of protein turnover. This chain is Ubiquitin carboxyl-terminal hydrolase MINDY-2, found in Homo sapiens (Human).